The sequence spans 221 residues: 7-cyano-7-deazaguanine synthase (221 aa).

Position 8 to 18 (8 to 18 (MSGGMDSTLCA)) interacts with ATP. Residues Cys-187, Cys-195, Cys-198, and Cys-201 each coordinate Zn(2+).

This sequence belongs to the QueC family. The cofactor is Zn(2+).

The enzyme catalyses 7-carboxy-7-deazaguanine + NH4(+) + ATP = 7-cyano-7-deazaguanine + ADP + phosphate + H2O + H(+). Its pathway is purine metabolism; 7-cyano-7-deazaguanine biosynthesis. Functionally, catalyzes the ATP-dependent conversion of 7-carboxy-7-deazaguanine (CDG) to 7-cyano-7-deazaguanine (preQ(0)). This Campylobacter concisus (strain 13826) protein is 7-cyano-7-deazaguanine synthase.